Reading from the N-terminus, the 85-residue chain is Type 3 secretion system needle filament protein (85 aa).

A coiled-coil region spans residues 13–41 (LDTVANALKEQANAANKDVNDAIKALQGT).

The core secretion machinery of the T3SS is composed of approximately 20 different proteins, including cytoplasmic components, a base, an export apparatus and a needle. This subunit polymerizes and forms the helical needle filament. Forms a stable heterotrimeric complex with PscE and PscG in the cytoplasm, blocking it in a monomeric state and preventing its polymerization.

It localises to the secreted. The protein localises to the cell surface. Component of the type III secretion system (T3SS), also called injectisome, which is used to inject bacterial effector proteins into eukaryotic host cells, facilitating the establishment and dissemination of infection. PscF/SctF forms the external needle filament that protrudes from the bacterial surface. In Pseudomonas aeruginosa (strain ATCC 15692 / DSM 22644 / CIP 104116 / JCM 14847 / LMG 12228 / 1C / PRS 101 / PAO1), this protein is Type 3 secretion system needle filament protein.